The sequence spans 428 residues: Enolase (428 aa).

Residue Q167 coordinates (2R)-2-phosphoglycerate. The Proton donor role is filled by E209. Residues D246, E288, and D315 each coordinate Mg(2+). 4 residues coordinate (2R)-2-phosphoglycerate: K340, R369, S370, and K391. K340 serves as the catalytic Proton acceptor.

This sequence belongs to the enolase family. Component of the RNA degradosome, a multiprotein complex involved in RNA processing and mRNA degradation. It depends on Mg(2+) as a cofactor.

The protein resides in the cytoplasm. The protein localises to the secreted. It is found in the cell surface. It carries out the reaction (2R)-2-phosphoglycerate = phosphoenolpyruvate + H2O. It participates in carbohydrate degradation; glycolysis; pyruvate from D-glyceraldehyde 3-phosphate: step 4/5. In terms of biological role, catalyzes the reversible conversion of 2-phosphoglycerate (2-PG) into phosphoenolpyruvate (PEP). It is essential for the degradation of carbohydrates via glycolysis. The protein is Enolase of Pseudomonas savastanoi pv. phaseolicola (strain 1448A / Race 6) (Pseudomonas syringae pv. phaseolicola (strain 1448A / Race 6)).